We begin with the raw amino-acid sequence, 213 residues long: ATP synthase peripheral stalk subunit OSCP, mitochondrial (213 aa).

A mitochondrion-targeting transit peptide spans 1-23 (MAAPAVSGVSQQVRYFGTSVVRP). An SIFI-degron motif is present at residues 5 to 23 (AVSGVSQQVRYFGTSVVRP). N6-acetyllysine occurs at positions 54, 60, 70, and 73. Lys-90 carries the N6-succinyllysine modification. An N6-acetyllysine; alternate mark is found at Lys-158 and Lys-162. Residues Lys-158 and Lys-162 each carry the N6-succinyllysine; alternate modification. Lys-172, Lys-176, and Lys-192 each carry N6-acetyllysine. Lys-199 bears the N6-succinyllysine mark.

This sequence belongs to the ATPase delta chain family. As to quaternary structure, component of the ATP synthase complex composed at least of ATP5F1A/subunit alpha, ATP5F1B/subunit beta, ATP5MC1/subunit c (homooctomer), MT-ATP6/subunit a, MT-ATP8/subunit 8, ATP5ME/subunit e, ATP5MF/subunit f, ATP5MG/subunit g, ATP5MK/subunit k, ATP5MJ/subunit j, ATP5F1C/subunit gamma, ATP5F1D/subunit delta, ATP5F1E/subunit epsilon, ATP5PF/subunit F6, ATP5PB/subunit b, ATP5PD/subunit d, ATP5PO/subunit OSCP. ATP synthase complex consists of a soluble F(1) head domain (subunits alpha(3) and beta(3)) - the catalytic core - and a membrane F(0) domain - the membrane proton channel (subunits c, a, 8, e, f, g, k and j). These two domains are linked by a central stalk (subunits gamma, delta, and epsilon) rotating inside the F1 region and a stationary peripheral stalk (subunits F6, b, d, and OSCP). Acetylation at Lys-162 decreases ATP production. Deacetylated by SIRT3. Post-translationally, in response to mitochondrial stress, the precursor protein is ubiquitinated by the SIFI complex in the cytoplasm before mitochondrial import, leading to its degradation. Within the SIFI complex, UBR4 initiates ubiquitin chain that are further elongated or branched by KCMF1.

The protein resides in the mitochondrion. It localises to the mitochondrion inner membrane. Functionally, subunit OSCP, of the mitochondrial membrane ATP synthase complex (F(1)F(0) ATP synthase or Complex V) that produces ATP from ADP in the presence of a proton gradient across the membrane which is generated by electron transport complexes of the respiratory chain. ATP synthase complex consist of a soluble F(1) head domain - the catalytic core - and a membrane F(1) domain - the membrane proton channel. These two domains are linked by a central stalk rotating inside the F(1) region and a stationary peripheral stalk. During catalysis, ATP synthesis in the catalytic domain of F(1) is coupled via a rotary mechanism of the central stalk subunits to proton translocation. In vivo, can only synthesize ATP although its ATP hydrolase activity can be activated artificially in vitro. Part of the complex F(0) domain. Part of the complex F(0) domain and the peripheric stalk, which acts as a stator to hold the catalytic alpha(3)beta(3) subcomplex and subunit a/ATP6 static relative to the rotary elements. The sequence is that of ATP synthase peripheral stalk subunit OSCP, mitochondrial from Callithrix jacchus (White-tufted-ear marmoset).